Consider the following 825-residue polypeptide: AMP deaminase 2 (825 aa).

The disordered stretch occupies residues 1–49; sequence MASYPSGSGKPKAKYPFKKRASLQASTAAPEARGGLGAPPLQSARSLPG. Over residues 11–21 the composition is skewed to basic residues; that stretch reads PKAKYPFKKRA. S22 is subject to Phosphoserine. R45 carries the post-translational modification Omega-N-methylarginine. Phosphoserine occurs at positions 46, 64, and 80. The residue at position 91 (Y91) is a Phosphotyrosine. A phosphoserine mark is found at S97 and S114. Residue T134 is modified to Phosphothreonine. Phosphoserine occurs at positions 136 and 138. The Zn(2+) site is built by H364 and H366. Substrate-binding positions include H366 and 435–440; that span reads KFNAKY. H633 serves as a coordination point for Zn(2+). E636 lines the substrate pocket. The active-site Proton acceptor is the H655. D710 is a Zn(2+) binding site. 711 to 714 contributes to the substrate binding site; the sequence is DPLQ.

It belongs to the metallo-dependent hydrolases superfamily. Adenosine and AMP deaminases family. In terms of assembly, homotetramer. It depends on Zn(2+) as a cofactor. As to expression, highly expressed in cerebellum.

It carries out the reaction AMP + H2O + H(+) = IMP + NH4(+). The protein operates within purine metabolism; IMP biosynthesis via salvage pathway; IMP from AMP: step 1/1. Functionally, AMP deaminase plays a critical role in energy metabolism. Catalyzes the deamination of AMP to IMP and plays an important role in the purine nucleotide cycle. This chain is AMP deaminase 2, found in Homo sapiens (Human).